The following is a 107-amino-acid chain: Iron-binding protein IscA (107 aa).

Residues Cys35, Cys99, and Cys101 each contribute to the Fe cation site.

This sequence belongs to the HesB/IscA family. In terms of assembly, homodimer; may form tetramers and higher multimers. Requires Fe cation as cofactor.

Functionally, is able to transfer iron-sulfur clusters to apo-ferredoxin. Multiple cycles of [2Fe2S] cluster formation and transfer are observed, suggesting that IscA acts catalytically. Recruits intracellular free iron so as to provide iron for the assembly of transient iron-sulfur cluster in IscU in the presence of IscS, L-cysteine and the thioredoxin reductase system TrxA/TrxB. This chain is Iron-binding protein IscA, found in Klebsiella pneumoniae subsp. pneumoniae (strain ATCC 700721 / MGH 78578).